The chain runs to 167 residues: Ubiquitin-conjugating enzyme E2 15 (167 aa).

Positions 5–165 constitute a UBC core domain; that stretch reads ASEQLLRKQL…VRRLVRRSIE (161 aa). The active-site Glycyl thioester intermediate is the Cys90.

Belongs to the ubiquitin-conjugating enzyme family.

The enzyme catalyses S-ubiquitinyl-[E1 ubiquitin-activating enzyme]-L-cysteine + [E2 ubiquitin-conjugating enzyme]-L-cysteine = [E1 ubiquitin-activating enzyme]-L-cysteine + S-ubiquitinyl-[E2 ubiquitin-conjugating enzyme]-L-cysteine.. The protein operates within protein modification; protein ubiquitination. In terms of biological role, catalyzes the covalent attachment of ubiquitin to other proteins. Has a role in the formation of chromatin structures that influence the localization of transcriptional silencing factors. In Schizosaccharomyces pombe (strain 972 / ATCC 24843) (Fission yeast), this protein is Ubiquitin-conjugating enzyme E2 15 (ubc15).